A 554-amino-acid polypeptide reads, in one-letter code: Protein translocase subunit SecD (554 aa).

The next 6 membrane-spanning stretches (helical) occupy residues 10-30 (LVIL…MFYA), 392-412 (AGMV…IASY), 414-434 (LFGF…FAVM), 435-455 (GAIG…TIGT), 491-511 (AIID…VLGA), and 516-536 (GFAV…IWVV).

This sequence belongs to the SecD/SecF family. SecD subfamily. As to quaternary structure, forms a complex with SecF. Part of the essential Sec protein translocation apparatus which comprises SecA, SecYEG and auxiliary proteins SecDF-YajC and YidC.

It is found in the cell inner membrane. Part of the Sec protein translocase complex. Interacts with the SecYEG preprotein conducting channel. SecDF uses the proton motive force (PMF) to complete protein translocation after the ATP-dependent function of SecA. The sequence is that of Protein translocase subunit SecD from Rhodobacter capsulatus (strain ATCC BAA-309 / NBRC 16581 / SB1003).